The primary structure comprises 226 residues: MGHKVNTLSNRLGLIVGWQSLWYSHYPERIKEDFKIRKYLENRLSKANISRIYIERSLNRVIITISSSRPSIIIGKGGSEIDKLKKELNIFIYKKIQINIFEIKKPELDAVLVSKSIASQLENRGSYKKAIKICISAALQVNAEGIKIKISGRLNGAEMARKETYKEGRIPLSTFRADIDYHMTEAHTNYGIIGIKVWIMKGEIYGKKNLFNIFKLKYKKKKVYSD.

One can recognise a KH type-2 domain in the interval 36 to 104 (IRKYLENRLS…KIQINIFEIK (69 aa)).

This sequence belongs to the universal ribosomal protein uS3 family. In terms of assembly, part of the 30S ribosomal subunit. Forms a tight complex with proteins S10 and S14.

Binds the lower part of the 30S subunit head. Binds mRNA in the 70S ribosome, positioning it for translation. This Karelsulcia muelleri (strain GWSS) (Sulcia muelleri) protein is Small ribosomal subunit protein uS3.